The primary structure comprises 274 residues: NH(3)-dependent NAD(+) synthetase (274 aa).

ATP is bound at residue 46–53 (GISGGQDS). Position 52 (aspartate 52) interacts with Mg(2+). Arginine 140 contacts deamido-NAD(+). Residue threonine 160 participates in ATP binding. A Mg(2+)-binding site is contributed by glutamate 165. Deamido-NAD(+) is bound by residues lysine 173 and aspartate 180. Lysine 189 and threonine 211 together coordinate ATP. 260 to 261 (HK) lines the deamido-NAD(+) pocket.

The protein belongs to the NAD synthetase family. In terms of assembly, homodimer.

It carries out the reaction deamido-NAD(+) + NH4(+) + ATP = AMP + diphosphate + NAD(+) + H(+). Its pathway is cofactor biosynthesis; NAD(+) biosynthesis; NAD(+) from deamido-NAD(+) (ammonia route): step 1/1. Functionally, catalyzes the ATP-dependent amidation of deamido-NAD to form NAD. Uses ammonia as a nitrogen source. The protein is NH(3)-dependent NAD(+) synthetase of Streptococcus pyogenes serotype M3 (strain ATCC BAA-595 / MGAS315).